The following is a 143-amino-acid chain: Protein SLC31A2 (143 aa).

Over 1–22 the chain is Extracellular; the sequence is MPMHFIFSDEAVLLFDFWRVHS. Residues 23–43 form a helical membrane-spanning segment; sequence PTGMALSVLVVLLLAVLYEGI. Topologically, residues 44–93 are cytoplasmic; sequence KVGKAKLLHKTLESLPATNSQQFILGPDQDSTGSRSTSDNRTRLRWFLCY. Phosphothreonine is present on Thr75. Phosphoserine is present on Ser77. Residues 94 to 114 form a helical membrane-spanning segment; that stretch reads FGQSLVHVIQVVIGYFVMLAV. Residues 115 to 119 are Extracellular-facing; the sequence is MSYNT. The helical transmembrane segment at 120-140 threads the bilayer; the sequence is WIFLGVVLGSAVGYYLAYPLL. The Cytoplasmic portion of the chain corresponds to 141 to 143; that stretch reads NMT.

Belongs to the copper transporter (Ctr) (TC 1.A.56) family. SLC31A subfamily. In terms of assembly, oligomer. Interacts with SLC31A1; this interaction stabilizes SLC31A2 and protects it from ubiquitination and the subsequent degradation. Ubiquitinated; ubiquitination and the subsequent proteasomal degradation are prevent by SLC31A1 that stabilizes it.

Its subcellular location is the membrane. The protein localises to the cytoplasmic vesicle membrane. The protein resides in the late endosome membrane. It localises to the lysosome membrane. It is found in the recycling endosome membrane. Its function is as follows. Does not function as a copper(1+) importer in vivo. However, in vitro functions as a low-affinity copper(1+) importer. Regulator of SLC31A1 which facilitates the cleavage of the SLC31A1 ecto-domain or which stabilizes the truncated form of SLC31A1 (Truncated CTR1 form), thereby drives the SLC31A1 truncated form-dependent endosomal copper export and modulates the copper and cisplatin accumulation via SLC31A1. The polypeptide is Protein SLC31A2 (Mus musculus (Mouse)).